A 1033-amino-acid chain; its full sequence is Tyrosine-protein kinase-like otk (1033 aa).

A signal peptide spans 1 to 22 (MTARMISICGLVMALMMASVLA). The Extracellular segment spans residues 23–581 (SSSRFQRVPQ…GGDGFLVTRA (559 aa)). Ig-like C2-type domains lie at 25–114 (SRFQ…AKLS), 113–199 (LSVI…RVMS), 251–365 (PEDL…APIN), 368–463 (PGIL…VAIN), and 468–558 (PKFS…VQLV). Asn39 is a glycosylation site (N-linked (GlcNAc...) asparagine). 4 disulfide bridges follow: Cys46–Cys95, Cys137–Cys188, Cys276–Cys354, and Cys399–Cys447. N-linked (GlcNAc...) asparagine glycans are attached at residues Asn336, Asn417, Asn429, Asn444, Asn457, Asn512, and Asn524. Cys490 and Cys542 form a disulfide bridge. Residues 582–602 (VLITMTVALAYIVLVVGLMLW) form a helical membrane-spanning segment. Residues 603 to 1033 (CRYRRQARKA…LSKAMQSAEK (431 aa)) lie on the Cytoplasmic side of the membrane. Disordered regions lie at residues 617–679 (LSTK…KKSA) and 718–760 (SPSD…KTSM). The span at 655 to 673 (KSSGDAQKSDDTACSQQSR) shows a compositional bias: polar residues. Ser678 bears the Phosphoserine mark. Residues 692–1028 (LSELIQIGRG…QLGAALSKAM (337 aa)) form the Protein kinase; inactive domain. A compositionally biased stretch (basic and acidic residues) spans 720–731 (SDKDADTEKQHS).

This sequence belongs to the protein kinase superfamily. Tyr protein kinase family. Insulin receptor subfamily. In terms of assembly, interacts with plexA; component of a receptor complex that mediates the repulsive signaling in response to Semaphorin ligands. Dynamically expressed during embryogenesis in several areas of the developing nervous system, including neurons and fasciculating axons. Expression in stage 7 embryos is seen in the anterior midgut primordia, cephalic furrow and along the germinal band. At stage 11, expression is in 15 stripes over the trunk region, and in the anterior and posterior midgut primordia. Stage 12 shows expression in the developing nervous system, procephalic lobe and maxillar bud. Stage 13 shows expression in the ventral cord, maxillar segment and in three regions of the gut. At stage 16 expression is preferentially detected throughout the nervous system, including the neuromers in the ventral cord and the supraesophageal ganglion (at protein level). In larva, expression is seen in developing R cells and is localized predominantly to R1-R6 growth cones.

The protein resides in the cell membrane. In terms of biological role, acts as a calcium-dependent, homophilic cell adhesion molecule that regulates neural recognition during the development of the nervous system. Component of the repulsive Plexin signaling response to regulate motor axon guidance at the embryonic stage. Also component of a receptor complex that is required in the adult visual system to innervate the lamina layer; specific targeting of R1-R6 axons. In Drosophila melanogaster (Fruit fly), this protein is Tyrosine-protein kinase-like otk.